Reading from the N-terminus, the 137-residue chain is MPTINQLVRKPRKSKIEKSDSPALNIGYNSHKKVHTKLAAPQKRGVATRVGTMTPKKPNSALRKFARVRLSNLIEVTAYIPGIGHNLQEHSVVLIRGGRVKDLPGVRYHIVRGALDTAGVADRKQGRSKYGAKRPKG.

Disordered regions lie at residues 1–21 (MPTINQLVRKPRKSKIEKSDS) and 34–57 (VHTKLAAPQKRGVATRVGTMTPKK). Position 102 is a 3-methylthioaspartic acid (aspartate 102).

It belongs to the universal ribosomal protein uS12 family. In terms of assembly, part of the 30S ribosomal subunit. Contacts proteins S8 and S17. May interact with IF1 in the 30S initiation complex.

With S4 and S5 plays an important role in translational accuracy. Its function is as follows. Interacts with and stabilizes bases of the 16S rRNA that are involved in tRNA selection in the A site and with the mRNA backbone. Located at the interface of the 30S and 50S subunits, it traverses the body of the 30S subunit contacting proteins on the other side and probably holding the rRNA structure together. The combined cluster of proteins S8, S12 and S17 appears to hold together the shoulder and platform of the 30S subunit. The protein is Small ribosomal subunit protein uS12 of Streptococcus equi subsp. zooepidemicus (strain H70).